A 79-amino-acid polypeptide reads, in one-letter code: MEIIHYIVIIMTLLSSLASLLQRDLIKCIILSGFAGLCMAYLYYALLAPDVALTEAILGGAILPALFAFTVRRTQRIDE.

Helical transmembrane passes span 28–48 (CIIL…ALLA) and 51–71 (VALT…AFTV).

Its subcellular location is the cell membrane. This is an uncharacterized protein from Methanocaldococcus jannaschii (strain ATCC 43067 / DSM 2661 / JAL-1 / JCM 10045 / NBRC 100440) (Methanococcus jannaschii).